Reading from the N-terminus, the 180-residue chain is Lipid droplet coating protein Cap20 (180 aa).

The protein belongs to the perilipin family. Interacts with class I hydrophobin Hydr1. Interacts also with the cAMP-dependent protein kinase catalytic subunit PkaC1.

It is found in the lipid droplet. Functionally, lipid droplet coating protein that regulates lipid metabolism, appressorial turgor pressure, and virulence. Mature appressoria with high turgor pressure are essential to penetrate the leaf surface. The sequence is that of Lipid droplet coating protein Cap20 from Colletotrichum siamense (Anthracnose fungus).